The sequence spans 171 residues: Mitochondrial import inner membrane translocase subunit Tim17-A (171 aa).

A disulfide bridge connects residues C9 and C78. The next 3 helical transmembrane spans lie at 17–37 (CGGA…IKGF), 63–77 (GGSF…SMID), and 113–133 (VGSA…GILL). The disordered stretch occupies residues 144–171 (GPQFAEDPSQLPSTQLPSSPFGDYRQYQ). Residues 151–163 (PSQLPSTQLPSSP) show a composition bias toward low complexity.

The protein belongs to the Tim17/Tim22/Tim23 family. Component of the TIM23 complex at least composed of TIMM23, TIMM17 (TIMM17A or TIMM17B) and TIMM50. The complex interacts with the TIMM44 component of the PAM complex and with DNAJC15. In terms of processing, degraded by YMEL1 downstream of the integrated stress response (ISR).

The protein localises to the mitochondrion inner membrane. Functionally, essential component of the TIM23 complex, a complex that mediates the translocation of transit peptide-containing proteins across the mitochondrial inner membrane. This is Mitochondrial import inner membrane translocase subunit Tim17-A (TIMM17A) from Homo sapiens (Human).